Consider the following 203-residue polypeptide: Holliday junction branch migration complex subunit RuvA (203 aa).

The domain I stretch occupies residues 1-63 (MYEYLKGLVT…DTDITLFGFY (63 aa)). The interval 64–142 (DLDEKQLFQK…DLEQSATLVG (79 aa)) is domain II. The segment at 143-153 (QTAIDLGSQGD) is flexible linker. The segment at 153–203 (DSPELSDALAALSALGYSAREVKAITPKLTDFAAQTTDQYLREGLRLLMKK) is domain III.

This sequence belongs to the RuvA family. Homotetramer. Forms an RuvA(8)-RuvB(12)-Holliday junction (HJ) complex. HJ DNA is sandwiched between 2 RuvA tetramers; dsDNA enters through RuvA and exits via RuvB. An RuvB hexamer assembles on each DNA strand where it exits the tetramer. Each RuvB hexamer is contacted by two RuvA subunits (via domain III) on 2 adjacent RuvB subunits; this complex drives branch migration. In the full resolvosome a probable DNA-RuvA(4)-RuvB(12)-RuvC(2) complex forms which resolves the HJ.

It localises to the cytoplasm. The RuvA-RuvB-RuvC complex processes Holliday junction (HJ) DNA during genetic recombination and DNA repair, while the RuvA-RuvB complex plays an important role in the rescue of blocked DNA replication forks via replication fork reversal (RFR). RuvA specifically binds to HJ cruciform DNA, conferring on it an open structure. The RuvB hexamer acts as an ATP-dependent pump, pulling dsDNA into and through the RuvAB complex. HJ branch migration allows RuvC to scan DNA until it finds its consensus sequence, where it cleaves and resolves the cruciform DNA. This Latilactobacillus sakei subsp. sakei (strain 23K) (Lactobacillus sakei subsp. sakei) protein is Holliday junction branch migration complex subunit RuvA.